The following is a 79-amino-acid chain: MAMKLRLTRMGCKKRPFYRIVAMNSETRRDGRALEYLGYYNPMVDPAEIKVDGDKVRAWLARGAEPTDTVRALLQKAGV.

This sequence belongs to the bacterial ribosomal protein bS16 family.

The polypeptide is Small ribosomal subunit protein bS16 (Solidesulfovibrio magneticus (strain ATCC 700980 / DSM 13731 / RS-1) (Desulfovibrio magneticus)).